Consider the following 812-residue polypeptide: Leucine-rich repeat-containing protein 41 (812 aa).

The segment at 45–54 (ALFELCGRAV) is interaction with Elongin BC complex. A phosphoserine mark is found at serine 155, serine 276, and serine 326. Positions 267-408 (GEASRGRAPS…GARTRQGPGA (142 aa)) are disordered. The residue at position 327 (threonine 327) is a Phosphothreonine. Residues 354-381 (TKRSPSAPAATSSASSSTSSYKRAPASS) show a composition bias toward low complexity. Phosphoserine occurs at positions 357 and 373. The segment covering 387-401 (PLKRFKRAAGKKGAR) has biased composition (basic residues). 7 LRR repeats span residues 487–507 (WVSL…IFRL), 518–530 (AGCR…LSDL), 531–555 (FSPL…VLSI), 613–635 (SGSL…FGLV), 636–659 (LQTL…LADC), 701–728 (NSTL…VFSE), and 731–752 (SSSL…LLEF).

Part of an E3 ubiquitin-protein ligase complex with Elongin BC (ELOB and ELOC), RBX1 and CUL5. Component of a probable ECS(LRRC41) complex which contains CUL5, RNF7/RBX2, Elongin BC and LRRC41. Interacts with CUL5, RNF7, ELOB and ELOC.

It participates in protein modification; protein ubiquitination. Probable substrate recognition component of an ECS (Elongin BC-CUL2/5-SOCS-box protein) E3 ubiquitin ligase complex which mediates the ubiquitination and subsequent proteasomal degradation of target proteins. The chain is Leucine-rich repeat-containing protein 41 (LRRC41) from Homo sapiens (Human).